The following is a 228-amino-acid chain: Gliolectin (228 aa).

At 1 to 120 (MLCPPMALGP…NPKAVSQAPR (120 aa)) the chain is on the cytoplasmic side. The chain crosses the membrane as a helical; Signal-anchor for type II membrane protein span at residues 121-137 (GMALTPAQISASAKLIL). Over 138-228 (QKCPESDRKK…GTSELADQKQ (91 aa)) the chain is Extracellular. A disordered region spans residues 141–228 (PESDRKKSNG…GTSELADQKQ (88 aa)). 6 N-linked (GlcNAc...) asparagine glycosylation sites follow: asparagine 149, asparagine 156, asparagine 198, asparagine 199, asparagine 205, and asparagine 218. The span at 195–213 (NNNNNSSSSNNNSNMNINN) shows a compositional bias: low complexity. A compositionally biased stretch (polar residues) spans 218 to 228 (NGTSELADQKQ).

In terms of tissue distribution, expressed by a subset of glial cells found at the midline of the embryo stage 12 nervous system. Expression is highest during the formation of the embryonic axonal commissures, a process requiring midline glial cell function (at protein level).

It is found in the membrane. Has a role in intercellular carbohydrate-mediated cell adhesion. This is Gliolectin from Drosophila melanogaster (Fruit fly).